Consider the following 195-residue polypeptide: Aminoglycoside 2'-N-acetyltransferase (195 aa).

The N-acetyltransferase domain maps to Val21 to Asp180. Residues Asp45 and Glu92–Ala93 each bind substrate. CoA contacts are provided by residues Val94–Val96 and Arg101–Ala106. Substrate contacts are provided by residues Ser127 and Glu161 to Asp162.

This sequence belongs to the AAC(2')-I acetyltransferase family. In terms of assembly, homodimer.

In terms of biological role, confers resistance to gentamicin, tobramycin, dibekacin, netilmicin, and 6'-N-ethylnetilmicin. This Mycolicibacterium fortuitum (Mycobacterium fortuitum) protein is Aminoglycoside 2'-N-acetyltransferase (aac).